Here is a 157-residue protein sequence, read N- to C-terminus: SsrA-binding protein (157 aa).

The tract at residues 133-157 is disordered; sequence LHDKRESEKKRDWGREKGRLLRARG. Residues 135-151 are compositionally biased toward basic and acidic residues; that stretch reads DKRESEKKRDWGREKGR.

The protein belongs to the SmpB family.

It is found in the cytoplasm. Functionally, required for rescue of stalled ribosomes mediated by trans-translation. Binds to transfer-messenger RNA (tmRNA), required for stable association of tmRNA with ribosomes. tmRNA and SmpB together mimic tRNA shape, replacing the anticodon stem-loop with SmpB. tmRNA is encoded by the ssrA gene; the 2 termini fold to resemble tRNA(Ala) and it encodes a 'tag peptide', a short internal open reading frame. During trans-translation Ala-aminoacylated tmRNA acts like a tRNA, entering the A-site of stalled ribosomes, displacing the stalled mRNA. The ribosome then switches to translate the ORF on the tmRNA; the nascent peptide is terminated with the 'tag peptide' encoded by the tmRNA and targeted for degradation. The ribosome is freed to recommence translation, which seems to be the essential function of trans-translation. The sequence is that of SsrA-binding protein from Bradyrhizobium sp. (strain BTAi1 / ATCC BAA-1182).